The sequence spans 462 residues: MSARPQNVGIKAIEIYFPRRCISEDELEDFDGVAKGKYTIGFGQKYMACTDDREDINSFALSVVSGLLEKNNIDPRSIGRLDVGTETIIDKSKSVKTVLMDLFAPSGNMNIEGIDSKNACYGGTAALFNAINWVESSSWDGRDAIVVAGDIAIYAEGSARPVGGAGSVAMLIGPDAPLVFEPAHGTHMSNYWDFYKPNLSSEYPEVDGPETIQTYLGCLDKAYDAYRLRAAKLKSGAANGHSDASSLASIKVDDFDYTLFHSPYSKLVQKGFGRLLYNDFFSDPKNEKYASIPANFAELDRKSTITNKDVEKAFAAFGKEAQQTKLEPGMNTVRRCGNMYTASLYGGLVSLLSNIPSQEIQGKRILLYSFGSGAAASMFAIRINGSTEQIVKAVDLKNRLDSMKVVPCQTYVEALKTREATHNAVNHKPVGQLENLWPGAYYLENVDHMYRRTYGRIPTNAN.

Glu86 functions as the Proton donor/acceptor in the catalytic mechanism. Cys120 (acyl-thioester intermediate) is an active-site residue. Positions 120, 211, 261, 270, 338, and 372 each coordinate (3S)-3-hydroxy-3-methylglutaryl-CoA. His261 acts as the Proton donor/acceptor in catalysis.

This sequence belongs to the thiolase-like superfamily. HMG-CoA synthase family.

The catalysed reaction is acetoacetyl-CoA + acetyl-CoA + H2O = (3S)-3-hydroxy-3-methylglutaryl-CoA + CoA + H(+). The protein operates within siderophore biosynthesis. Hydroxymethylglutaryl-CoA synthase involved in the biosynthesis of siderophore ferrichrome A which is contributing to organismal virulence. The first step of ferrichrome A biosynthesis is performed by the HMG-CoA synthase hcs1 which catalyzes the generation of HMG-CoA and CoA using acetoacetyl-CoA and acetyl-CoA as substrates. The enoyl-CoA isomerase/hydratase fer4 then catalyzes the conversion of hcs1-produced HMG-CoA to methylglutaconyl-CoA. The acyltransferase fer5 then fuses the fer4-generated methylglutaconyl-CoA with sid1-generated hydroxyornithine to yield methylglutaconyl hydroxyornithine. Methylglutaconyl hydroxyornithine is then available for use by the NRPS fer3 to generate ferrichrome A. This Mycosarcoma maydis (Corn smut fungus) protein is Hydroxymethylglutaryl-CoA synthase.